Consider the following 526-residue polypeptide: Butyrophilin subfamily 1 member A1 (526 aa).

The first 26 residues, 1-26 (MAVFPNSCLAGCLLIFILLQLPKLDS), serve as a signal peptide directing secretion. Ig-like V-type domains lie at 27 to 140 (APFD…VHLK) and 148 to 234 (PHIS…VEVS). The Extracellular portion of the chain corresponds to 27-242 (APFDVIGPQE…VSIPASFFPR (216 aa)). 2 disulfide bridges follow: Cys50–Cys124 and Cys164–Cys218. The N-linked (GlcNAc...) (complex) asparagine glycan is linked to Asn55. Asn215 is a glycosylation site (N-linked (GlcNAc...) (hybrid) asparagine). Residues 243–269 (LTPWMVAVAVILVVLGLLTIGSIFFTW) traverse the membrane as a helical segment. Residues 270–526 (RLYKERSRQR…IPLQPSQGVP (257 aa)) lie on the Cytoplasmic side of the membrane. In terms of domain architecture, B30.2/SPRY spans 285-479 (SKEKLLEELK…LTICPVTDGL (195 aa)).

Belongs to the immunoglobulin superfamily. BTN/MOG family. As to quaternary structure, seems to associate with xanthine dehydrogenase/oxidase. As to expression, expressed in mammary tissue.

The protein localises to the membrane. Functionally, may function in the secretion of milk-fat droplets. May act as a specific membrane-associated receptor for the association of cytoplasmic droplets with the apical plasma membrane. Inhibits the proliferation of CD4 and CD8 T-cells activated by anti-CD3 antibodies, T-cell metabolism and IL2 and IFNG secretion. This Bos taurus (Bovine) protein is Butyrophilin subfamily 1 member A1 (BTN1A1).